The chain runs to 41 residues: Iota-conotoxin-like r11d (41 aa).

Disulfide bonds link Cys2/Cys16, Cys9/Cys19, Cys15/Cys24, and Cys18/Cys35. Pro8 carries the 4-hydroxyproline modification. Residue Pro26 is modified to 4-hydroxyproline.

Position 41 corresponds to a L-threonine, and not a D-threonine as firstly supposed. In terms of tissue distribution, expressed by the venom duct.

The protein resides in the secreted. Iota-conotoxins bind to voltage-gated sodium channels (Nav) and act as agonists by shifting the voltage-dependence of activation to more hyperpolarized levels. Both natural (L-Thr form) and synthetic (D-Thr form) peptides cause paralysis and death following intracranial injection and grooming and hypersensitivity upon intraperitoneal injection into mice. The L-Thr form of the peptide is 7-fold more potent than the D-Thr form. Both natural peptide (L-Thr form) and synthetic peptide (D-Thr form) are active on nerve, and on muscle. In Conus radiatus (Rayed cone), this protein is Iota-conotoxin-like r11d.